Consider the following 269-residue polypeptide: Hydroxyethylthiazole kinase (269 aa).

Substrate is bound at residue methionine 45. ATP contacts are provided by arginine 121 and threonine 167. Glycine 194 serves as a coordination point for substrate.

It belongs to the Thz kinase family. Requires Mg(2+) as cofactor.

It catalyses the reaction 5-(2-hydroxyethyl)-4-methylthiazole + ATP = 4-methyl-5-(2-phosphooxyethyl)-thiazole + ADP + H(+). The protein operates within cofactor biosynthesis; thiamine diphosphate biosynthesis; 4-methyl-5-(2-phosphoethyl)-thiazole from 5-(2-hydroxyethyl)-4-methylthiazole: step 1/1. Catalyzes the phosphorylation of the hydroxyl group of 4-methyl-5-beta-hydroxyethylthiazole (THZ). The polypeptide is Hydroxyethylthiazole kinase (Bacillus licheniformis (strain ATCC 14580 / DSM 13 / JCM 2505 / CCUG 7422 / NBRC 12200 / NCIMB 9375 / NCTC 10341 / NRRL NRS-1264 / Gibson 46)).